The sequence spans 204 residues: Tat proofreading chaperone DmsD (204 aa).

The protein belongs to the TorD/DmsD family. DmsD subfamily.

Its function is as follows. Required for biogenesis/assembly of DMSO reductase, but not for the interaction of the DmsA signal peptide with the Tat system. May be part of a chaperone cascade complex that facilitates a folding-maturation pathway for the substrate protein. The polypeptide is Tat proofreading chaperone DmsD (Salmonella paratyphi A (strain ATCC 9150 / SARB42)).